A 250-amino-acid polypeptide reads, in one-letter code: Probable transcriptional regulatory protein SCO1521 (250 aa).

This sequence belongs to the TACO1 family.

It is found in the cytoplasm. The chain is Probable transcriptional regulatory protein SCO1521 from Streptomyces coelicolor (strain ATCC BAA-471 / A3(2) / M145).